The primary structure comprises 294 residues: Nucleotide-binding protein Reut_A0350 (294 aa).

8-15 (GISGSGKS) is a binding site for ATP. Residue 57 to 60 (DIRS) participates in GTP binding.

The protein belongs to the RapZ-like family.

Displays ATPase and GTPase activities. This is Nucleotide-binding protein Reut_A0350 from Cupriavidus pinatubonensis (strain JMP 134 / LMG 1197) (Cupriavidus necator (strain JMP 134)).